Here is a 349-residue protein sequence, read N- to C-terminus: Phenylalanine--tRNA ligase alpha subunit (349 aa).

E259 provides a ligand contact to Mg(2+).

This sequence belongs to the class-II aminoacyl-tRNA synthetase family. Phe-tRNA synthetase alpha subunit type 1 subfamily. Tetramer of two alpha and two beta subunits. Requires Mg(2+) as cofactor.

It is found in the cytoplasm. The catalysed reaction is tRNA(Phe) + L-phenylalanine + ATP = L-phenylalanyl-tRNA(Phe) + AMP + diphosphate + H(+). This Lactobacillus acidophilus (strain ATCC 700396 / NCK56 / N2 / NCFM) protein is Phenylalanine--tRNA ligase alpha subunit.